The following is a 419-amino-acid chain: Enolase (419 aa).

Gln161 contributes to the (2R)-2-phosphoglycerate binding site. The active-site Proton donor is Glu205. Positions 240, 283, and 309 each coordinate Mg(2+). (2R)-2-phosphoglycerate is bound by residues Lys334, Arg363, Ser364, and Lys385. Residue Lys334 is the Proton acceptor of the active site.

This sequence belongs to the enolase family. The cofactor is Mg(2+).

The protein localises to the cytoplasm. It is found in the secreted. The protein resides in the cell surface. The catalysed reaction is (2R)-2-phosphoglycerate = phosphoenolpyruvate + H2O. Its pathway is carbohydrate degradation; glycolysis; pyruvate from D-glyceraldehyde 3-phosphate: step 4/5. Catalyzes the reversible conversion of 2-phosphoglycerate (2-PG) into phosphoenolpyruvate (PEP). It is essential for the degradation of carbohydrates via glycolysis. In Saccharolobus islandicus (strain Y.N.15.51 / Yellowstone #2) (Sulfolobus islandicus), this protein is Enolase.